The sequence spans 207 residues: Ribonuclease HII (207 aa).

The RNase H type-2 domain maps to 20–207; it reads QLFAGVDEVG…KPVKRVLGIE (188 aa). Residues Asp26, Glu27, and Asp118 each contribute to the a divalent metal cation site.

It belongs to the RNase HII family. Mn(2+) serves as cofactor. Mg(2+) is required as a cofactor.

The protein localises to the cytoplasm. It catalyses the reaction Endonucleolytic cleavage to 5'-phosphomonoester.. Its function is as follows. Endonuclease that specifically degrades the RNA of RNA-DNA hybrids. This Aliivibrio fischeri (strain MJ11) (Vibrio fischeri) protein is Ribonuclease HII.